The primary structure comprises 441 residues: 3-phosphoshikimate 1-carboxyvinyltransferase (441 aa).

The tract at residues 1 to 24 (MSGTGQSDDPRELKAGGSLQGRVK) is disordered. The 3-phosphoshikimate site is built by Lys29, Ser30, and Arg34. Lys29 contacts phosphoenolpyruvate. Residues Gly103 and Arg132 each coordinate phosphoenolpyruvate. The 3-phosphoshikimate site is built by Ser177, Gln179, Asp328, and Lys355. Gln179 contributes to the phosphoenolpyruvate binding site. Asp328 acts as the Proton acceptor in catalysis. Positions 359 and 401 each coordinate phosphoenolpyruvate.

This sequence belongs to the EPSP synthase family. In terms of assembly, monomer.

It is found in the cytoplasm. It catalyses the reaction 3-phosphoshikimate + phosphoenolpyruvate = 5-O-(1-carboxyvinyl)-3-phosphoshikimate + phosphate. It participates in metabolic intermediate biosynthesis; chorismate biosynthesis; chorismate from D-erythrose 4-phosphate and phosphoenolpyruvate: step 6/7. In terms of biological role, catalyzes the transfer of the enolpyruvyl moiety of phosphoenolpyruvate (PEP) to the 5-hydroxyl of shikimate-3-phosphate (S3P) to produce enolpyruvyl shikimate-3-phosphate and inorganic phosphate. The polypeptide is 3-phosphoshikimate 1-carboxyvinyltransferase (Synechococcus sp. (strain CC9605)).